A 416-amino-acid chain; its full sequence is Antigen EG13 (416 aa).

The F-BAR domain occupies 1 to 247 (MIQERADIEK…TVAKVDADAD (247 aa)). The tract at residues 297-327 (LKTFTSPDRGGPIPGTTDSGSNISTSPVHTT) is disordered. A compositionally biased stretch (polar residues) spans 312–327 (TTDSGSNISTSPVHTT). Residues 361–416 (RPGVPIRALYDYVGVEADELSFNSGDLFEKLEDEDEQGWCKGRKDGRVGLYPRQLR) form the SH3 domain.

The chain is Antigen EG13 (EG13) from Echinococcus granulosus (Hydatid tapeworm).